The following is a 426-amino-acid chain: Glutamate-1-semialdehyde 2,1-aminomutase (426 aa).

Lysine 265 is modified (N6-(pyridoxal phosphate)lysine).

Belongs to the class-III pyridoxal-phosphate-dependent aminotransferase family. HemL subfamily. Homodimer. Pyridoxal 5'-phosphate serves as cofactor.

Its subcellular location is the cytoplasm. The catalysed reaction is (S)-4-amino-5-oxopentanoate = 5-aminolevulinate. It functions in the pathway porphyrin-containing compound metabolism; protoporphyrin-IX biosynthesis; 5-aminolevulinate from L-glutamyl-tRNA(Glu): step 2/2. In Salmonella enteritidis PT4 (strain P125109), this protein is Glutamate-1-semialdehyde 2,1-aminomutase.